We begin with the raw amino-acid sequence, 82 residues long: Putative membrane protein insertion efficiency factor (82 aa).

It belongs to the UPF0161 family.

Its subcellular location is the cell inner membrane. Could be involved in insertion of integral membrane proteins into the membrane. The polypeptide is Putative membrane protein insertion efficiency factor (Rickettsia typhi (strain ATCC VR-144 / Wilmington)).